Consider the following 335-residue polypeptide: Zinc transporter ZIP11 (335 aa).

Transmembrane regions (helical) follow at residues 12–32, 44–64, 72–92, 187–207, 256–278, 283–300, and 315–335; these read LLGT…VFIF, LGFA…APAV, GFGA…AAFV, IALL…AVGV, FWYG…FAVV, VLPY…YVVM, and LASW…VGLG.

It belongs to the ZIP transporter (TC 2.A.5) family.

It is found in the cell membrane. The protein resides in the nucleus. Its subcellular location is the cytoplasm. The protein localises to the golgi apparatus. It catalyses the reaction Zn(2+)(in) = Zn(2+)(out). The enzyme catalyses Cu(2+)(in) = Cu(2+)(out). Functionally, zinc importer that regulates cytosolic zinc concentrations either via zinc influx from the extracellular compartment or efflux from intracellular organelles such as Golgi apparatus. May transport copper ions as well. The transport mechanism remains to be elucidated. This Rattus norvegicus (Rat) protein is Zinc transporter ZIP11 (Slc39a11).